A 98-amino-acid polypeptide reads, in one-letter code: NADH-ubiquinone oxidoreductase chain 4L (98 aa).

Helical transmembrane passes span 1 to 21 (MPLISTNILLAFITALLGVLI), 26 to 46 (LMSSLLCLEGMMLSMFILVSL), and 61 to 81 (LILLVFAACEAAVGLALLVMV).

Belongs to the complex I subunit 4L family. In terms of assembly, core subunit of respiratory chain NADH dehydrogenase (Complex I) which is composed of 45 different subunits.

The protein resides in the mitochondrion inner membrane. It catalyses the reaction a ubiquinone + NADH + 5 H(+)(in) = a ubiquinol + NAD(+) + 4 H(+)(out). Core subunit of the mitochondrial membrane respiratory chain NADH dehydrogenase (Complex I) which catalyzes electron transfer from NADH through the respiratory chain, using ubiquinone as an electron acceptor. Part of the enzyme membrane arm which is embedded in the lipid bilayer and involved in proton translocation. In Nycticebus coucang (Slow loris), this protein is NADH-ubiquinone oxidoreductase chain 4L (MT-ND4L).